Consider the following 366-residue polypeptide: UDP-N-acetylglucosamine--N-acetylmuramyl-(pentapeptide) pyrophosphoryl-undecaprenol N-acetylglucosamine transferase (366 aa).

Residues 14–16 (TGG), N125, R168, S196, and Q297 each bind UDP-N-acetyl-alpha-D-glucosamine.

The protein belongs to the glycosyltransferase 28 family. MurG subfamily.

Its subcellular location is the cell inner membrane. It carries out the reaction di-trans,octa-cis-undecaprenyl diphospho-N-acetyl-alpha-D-muramoyl-L-alanyl-D-glutamyl-meso-2,6-diaminopimeloyl-D-alanyl-D-alanine + UDP-N-acetyl-alpha-D-glucosamine = di-trans,octa-cis-undecaprenyl diphospho-[N-acetyl-alpha-D-glucosaminyl-(1-&gt;4)]-N-acetyl-alpha-D-muramoyl-L-alanyl-D-glutamyl-meso-2,6-diaminopimeloyl-D-alanyl-D-alanine + UDP + H(+). It functions in the pathway cell wall biogenesis; peptidoglycan biosynthesis. In terms of biological role, cell wall formation. Catalyzes the transfer of a GlcNAc subunit on undecaprenyl-pyrophosphoryl-MurNAc-pentapeptide (lipid intermediate I) to form undecaprenyl-pyrophosphoryl-MurNAc-(pentapeptide)GlcNAc (lipid intermediate II). In Rhodopseudomonas palustris (strain HaA2), this protein is UDP-N-acetylglucosamine--N-acetylmuramyl-(pentapeptide) pyrophosphoryl-undecaprenol N-acetylglucosamine transferase.